Here is an 89-residue protein sequence, read N- to C-terminus: Omega-theraphotoxin-Ba1c (89 aa).

The N-terminal stretch at 1–23 is a signal peptide; it reads MRSLTLAAVLACSLLLVFHTSAA. Residues 24 to 50 constitute a propeptide that is removed on maturation; the sequence is EEHEAQEGYLMNPGDTDTALATVDDER. Cystine bridges form between cysteine 54-cysteine 75, cysteine 58-cysteine 81, and cysteine 67-cysteine 86.

The protein belongs to the neurotoxin 12 (Hwtx-2) family. 06 (TXP1) subfamily. In terms of tissue distribution, expressed by the venom gland.

Its subcellular location is the secreted. Functionally, inhibits voltage-gated calcium channels (Cav) in rat cerebellar granule cells. Has insecticidal activity. This Brachypelma albiceps (Mexican golden redrump tarantula) protein is Omega-theraphotoxin-Ba1c.